A 415-amino-acid polypeptide reads, in one-letter code: Multidrug resistance protein MdtA (415 aa).

The N-terminal stretch at 1–21 (MKGSYKSRWVIVIVVVIAAIA) is a signal peptide. Polar residues predominate over residues 31–47 (DSQSAAPGATKQAQQSP). 2 disordered regions span residues 31–60 (DSQS…GPLA) and 392–415 (EAQS…GARS). Positions 399–415 (PEEKATSREYAKKGARS) are enriched in basic and acidic residues.

It belongs to the membrane fusion protein (MFP) (TC 8.A.1) family. As to quaternary structure, part of a tripartite efflux system composed of MdtA, MdtB and MdtC.

The protein resides in the cell inner membrane. Functionally, the MdtABC tripartite complex confers resistance against novobiocin and deoxycholate. The polypeptide is Multidrug resistance protein MdtA (Escherichia coli O157:H7).